Consider the following 643-residue polypeptide: Pseudouridylate synthase PUS7L (643 aa).

Asp284 serves as the catalytic Nucleophile. A TRUD domain is found at 370 to 597 (GFVNYYGPQR…PGCYRPLLAK (228 aa)).

This sequence belongs to the pseudouridine synthase TruD family.

The enzyme catalyses a uridine in mRNA = a pseudouridine in mRNA. Its function is as follows. Pseudouridine synthase that catalyzes pseudouridylation of mRNAs. This chain is Pseudouridylate synthase PUS7L (pus7l), found in Danio rerio (Zebrafish).